A 337-amino-acid chain; its full sequence is Putative 2-aminoethylphosphonate-binding periplasmic protein (337 aa).

The first 21 residues, methionine 1 to alanine 21, serve as a signal peptide directing secretion.

It belongs to the bacterial solute-binding protein 1 family.

The protein localises to the periplasm. Functionally, probably part of the PhnSTUV complex (TC 3.A.1.11.5) involved in 2-aminoethylphosphonate import. The chain is Putative 2-aminoethylphosphonate-binding periplasmic protein (phnS) from Salmonella typhi.